Reading from the N-terminus, the 64-residue chain is Large ribosomal subunit protein bL28 (64 aa).

The protein belongs to the bacterial ribosomal protein bL28 family.

The sequence is that of Large ribosomal subunit protein bL28 (rpmB) from Mycobacterium leprae (strain TN).